The chain runs to 346 residues: Methylthioribose-1-phosphate isomerase (346 aa).

Substrate contacts are provided by residues 54–56, arginine 91, and glutamine 192; that span reads RGA. Aspartate 233 acts as the Proton donor in catalysis. Position 243–244 (243–244) interacts with substrate; that stretch reads NK.

This sequence belongs to the eIF-2B alpha/beta/delta subunits family. MtnA subfamily.

It carries out the reaction 5-(methylsulfanyl)-alpha-D-ribose 1-phosphate = 5-(methylsulfanyl)-D-ribulose 1-phosphate. It functions in the pathway amino-acid biosynthesis; L-methionine biosynthesis via salvage pathway; L-methionine from S-methyl-5-thio-alpha-D-ribose 1-phosphate: step 1/6. In terms of biological role, catalyzes the interconversion of methylthioribose-1-phosphate (MTR-1-P) into methylthioribulose-1-phosphate (MTRu-1-P). This Yersinia pseudotuberculosis serotype IB (strain PB1/+) protein is Methylthioribose-1-phosphate isomerase.